A 176-amino-acid polypeptide reads, in one-letter code: ATP-dependent protease subunit HslV (176 aa).

The active site involves Thr5. 3 residues coordinate Na(+): Ser161, Cys164, and Thr167.

It belongs to the peptidase T1B family. HslV subfamily. In terms of assembly, a double ring-shaped homohexamer of HslV is capped on each side by a ring-shaped HslU homohexamer. The assembly of the HslU/HslV complex is dependent on binding of ATP.

The protein resides in the cytoplasm. The catalysed reaction is ATP-dependent cleavage of peptide bonds with broad specificity.. Its activity is regulated as follows. Allosterically activated by HslU binding. In terms of biological role, protease subunit of a proteasome-like degradation complex believed to be a general protein degrading machinery. The sequence is that of ATP-dependent protease subunit HslV from Thermoanaerobacter sp. (strain X514).